The following is a 216-amino-acid chain: MNRQDLAVPLRLLGVSLLVFGLLYQGSLMAIGDAVFPNSSAGSPVYVDGQEQPVGSQMIGQQFRPGQPEDVQYFWSRPSANDYNAMTSASTNWGPTNPLLSERVRADLQNISQYETPDDSVPVNLVSESGSSYDAHISPAAAEYQVLRVANQTGISEQRLNEMIDEATKEPWLGIWGHERVNVLELNLMVRDALNEQNETDQNSDMNASEIANGDH.

A helical membrane pass occupies residues 12–32 (LLGVSLLVFGLLYQGSLMAIG). The segment covering 197-207 (QNETDQNSDMN) has biased composition (polar residues). The disordered stretch occupies residues 197–216 (QNETDQNSDMNASEIANGDH).

Belongs to the KdpC family. As to quaternary structure, the system is composed of three essential subunits: KdpA, KdpB and KdpC. The complex also contains KdpF, a small non-essential subunit.

It is found in the cell membrane. Functionally, part of the high-affinity ATP-driven potassium transport (or Kdp) system, which catalyzes the hydrolysis of ATP coupled with the electrogenic transport of potassium into the cytoplasm. This subunit acts as a catalytic chaperone that increases the ATP-binding affinity of the ATP-hydrolyzing subunit KdpB by the formation of a transient KdpB/KdpC/ATP ternary complex. The Kdp system is essential for growth under K(+) limitation, and for survival under desiccation and salt crystal inclusion. This Halobacterium salinarum (strain ATCC 29341 / DSM 671 / R1) protein is Potassium-transporting ATPase KdpC subunit.